The primary structure comprises 265 residues: Glutamate racemase (265 aa).

Substrate is bound by residues 7 to 8 and 39 to 40; these read DS and YG. The active-site Proton donor/acceptor is C70. Position 71–72 (71–72) interacts with substrate; it reads NT. C182 (proton donor/acceptor) is an active-site residue. Position 183–184 (183–184) interacts with substrate; sequence TH.

The protein belongs to the aspartate/glutamate racemases family.

The catalysed reaction is L-glutamate = D-glutamate. Its pathway is cell wall biogenesis; peptidoglycan biosynthesis. In terms of biological role, provides the (R)-glutamate required for cell wall biosynthesis. This chain is Glutamate racemase, found in Lachnospira eligens (strain ATCC 27750 / DSM 3376 / VPI C15-48 / C15-B4) (Eubacterium eligens).